The primary structure comprises 481 residues: ATP synthase subunit alpha (481 aa).

145–152 (GDRQTGKT) is a binding site for ATP.

This sequence belongs to the ATPase alpha/beta chains family. F-type ATPases have 2 components, CF(1) - the catalytic core - and CF(0) - the membrane proton channel. CF(1) has five subunits: alpha(3), beta(3), gamma(1), delta(1), epsilon(1). CF(0) has three main subunits: a(1), b(2) and c(9-12). The alpha and beta chains form an alternating ring which encloses part of the gamma chain. CF(1) is attached to CF(0) by a central stalk formed by the gamma and epsilon chains, while a peripheral stalk is formed by the delta and b chains.

Its subcellular location is the cell membrane. It carries out the reaction ATP + H2O + 4 H(+)(in) = ADP + phosphate + 5 H(+)(out). Functionally, produces ATP from ADP in the presence of a proton gradient across the membrane. The alpha chain is a regulatory subunit. The protein is ATP synthase subunit alpha of Carsonella ruddii (strain PV).